Reading from the N-terminus, the 297-residue chain is Bifunctional protein FolD (297 aa).

Residues G167 to S169, S192, and I233 contribute to the NADP(+) site.

The protein belongs to the tetrahydrofolate dehydrogenase/cyclohydrolase family. In terms of assembly, homodimer.

It catalyses the reaction (6R)-5,10-methylene-5,6,7,8-tetrahydrofolate + NADP(+) = (6R)-5,10-methenyltetrahydrofolate + NADPH. The catalysed reaction is (6R)-5,10-methenyltetrahydrofolate + H2O = (6R)-10-formyltetrahydrofolate + H(+). It participates in one-carbon metabolism; tetrahydrofolate interconversion. In terms of biological role, catalyzes the oxidation of 5,10-methylenetetrahydrofolate to 5,10-methenyltetrahydrofolate and then the hydrolysis of 5,10-methenyltetrahydrofolate to 10-formyltetrahydrofolate. The chain is Bifunctional protein FolD from Caulobacter vibrioides (strain ATCC 19089 / CIP 103742 / CB 15) (Caulobacter crescentus).